A 265-amino-acid polypeptide reads, in one-letter code: Putative cysteine-rich receptor-like protein kinase At4g11521 (265 aa).

The signal sequence occupies residues 1-23 (MMLNTLFLPIFLFFLITFDYVST). 2 consecutive Gnk2-homologous domains span residues 24-122 (QTCF…NISF) and 128-241 (MEPS…LYPF). 3 N-linked (GlcNAc...) asparagine glycosylation sites follow: Asn34, Asn102, and Asn119. Asn247 is a glycosylation site (N-linked (GlcNAc...) asparagine).

It belongs to the protein kinase superfamily. Ser/Thr protein kinase family. CRK subfamily.

The protein resides in the secreted. This chain is Putative cysteine-rich receptor-like protein kinase At4g11521, found in Arabidopsis thaliana (Mouse-ear cress).